A 106-amino-acid polypeptide reads, in one-letter code: Putative membrane protein insertion efficiency factor (106 aa).

It belongs to the UPF0161 family.

Its subcellular location is the cell inner membrane. Could be involved in insertion of integral membrane proteins into the membrane. The polypeptide is Putative membrane protein insertion efficiency factor (Acinetobacter baumannii (strain AB307-0294)).